The chain runs to 862 residues: Solute carrier family 4 member 11 (862 aa).

The Cytoplasmic portion of the chain corresponds to 1 to 343 (MSQNEHCQDS…IIGKSKSVGK (343 aa)). The helical transmembrane segment at 344 to 366 (YVTTTLFLYFACLLPTIAFGSLN) threads the bilayer. The Extracellular portion of the chain corresponds to 367–379 (DENTNGAIDVQKT). The chain crosses the membrane as a helical span at residues 380 to 393 (IAGQSIGGLLYALF). The Cytoplasmic portion of the chain corresponds to 394-398 (SGQPL). The chain crosses the membrane as a helical span at residues 399–415 (VILLTTAPLAIYTQVIR). Topologically, residues 416 to 428 (VICDDYNLDFNAF) are extracellular. A helical membrane pass occupies residues 429 to 452 (YAWTGLWNSFFLALYAFLNLSLLM). Over 453 to 460 (NLFKRSTE) the chain is Cytoplasmic. The helical transmembrane segment at 461–481 (EIIALFISITFVLDAVKGMVK) threads the bilayer. Over 482–542 (IFGKYYYGHH…SSPGSTHSGQ (61 aa)) the chain is Extracellular. N-linked (GlcNAc...) asparagine glycans are attached at residues asparagine 511 and asparagine 519. A helical membrane pass occupies residues 543-564 (ATAVLSLLIMLGTLWLGYTLYQ). Residues 565–577 (FKKSPYLHPCVRE) lie on the Cytoplasmic side of the membrane. A helical membrane pass occupies residues 578–599 (TLSDCALPIAVLSFSLIGSYGF). Residues 600–627 (QEIEMSKFRYNPSESLFEVAQIHSLSFK) are Extracellular-facing. The chain crosses the membrane as a helical span at residues 628 to 645 (AIGSAMGLGFLLSLLFFI). Residues 646 to 670 (EQNLVAALVNAPENRLVKGTAYHWD) are Cytoplasmic-facing. Residues 671 to 691 (LLLLAIINTGLSLFGLPWIHA) traverse the membrane as a helical segment. Residues 692-721 (AYPHSPLHVRALALVEERVENGHIYETIVD) are Extracellular-facing. A helical transmembrane segment spans residues 722–746 (VKETRLTALGASVLVGLSLLLLPFP). The Cytoplasmic segment spans residues 747 to 752 (LQWIPK). The helical transmembrane segment at 753–770 (PVLYGLFLYIALTSLDGN) threads the bilayer. Residues 771–774 (QLFS) lie on the Extracellular side of the membrane. A helical transmembrane segment spans residues 775-797 (RVALLLKEQTSYPPTHYIRRVPQ). The Cytoplasmic segment spans residues 798-802 (RKIHY). A helical transmembrane segment spans residues 803 to 819 (FTGLQILQLLLLCAFGM). Residues 820 to 823 (SSLP) lie on the Extracellular side of the membrane. A helical transmembrane segment spans residues 824 to 844 (YMKMVFPLIMIAMIPIRYNLL). At 845 to 862 (PRIIEAKYLDVMDAEHRP) the chain is on the cytoplasmic side.

It belongs to the anion exchanger (TC 2.A.31) family. Homodimer. Glycosylated. Expressed in the endothelial cells of the cornea. In the inner ear, is located in fibrocytes underlying the stria vascularis. In the kidney, is expressed in the thin descending limb of Henle loop.

It is found in the cell membrane. The protein resides in the basolateral cell membrane. The enzyme catalyses tetrahydroxoborate(in) + 2 Na(+)(in) = tetrahydroxoborate(out) + 2 Na(+)(out). In terms of biological role, multifunctional transporter with an impact in cell morphology and differentiation. In the presence of borate B(OH)4(-), acts as a voltage-dependent electrogenic Na(+)-coupled B(OH)4(-) cotransporter controlling boron homeostasis. At early stages of stem cell differentiation, participates in synergy with ITGA5-ITGB1 and ITGAV-ITGB3 integrins and BMPR1A to promote cell adhesion and contractility that drives differentiation toward osteogenic commitment while inhibiting adipogenesis. In the absence of B(OH)4(-), acts as a Na(+)-coupled OH(-) or H(+) permeable channel with implications in cellular redox balance. Regulates the oxidative stress response in corneal endothelium by enhancing antioxidant defenses and protecting cells from reactive oxygen species. In response to hypo-osmotic challenge, also acts as water permeable channel at the basolateral cell membrane of corneal endothelial cells and facilitates transendothelial fluid reabsorption in the aqueous humor. In the presence of ammonia, acts as an electrogenic NH3/H(+) cotransporter and may play a role in ammonia transport and reabsorption in renal Henle's loop epithelium. This is Solute carrier family 4 member 11 (Slc4a11) from Mus musculus (Mouse).